Reading from the N-terminus, the 712-residue chain is MPNMRHRVNSLTEEHEENMQMSKLTGHLSSISTLFPVKNDASQTLTLGQLGLGCPCQLVSLWHYLRKNSPSRAVNIKIFESQFDALADFNLKLASLTSPDPRLPRDDEQSTMVEALLRADIVAIEGCQRLIFDDGRVILDIYLGDTLSQLKCILPTSVKGDMTDNSALIAHWNITEKVKAGSLDQAMLWQIAKLSRDNAALSFTDPESKETRQMMALARSVGLRTLETTVSETTVPETQQQTENKNLDTASDAIPLQERRALRHAQSDKFQYCPVSAANEGDEDCDGEIAIIGGGVASTHLALSLAQRNKKVRIFCSDANFAQQASGNKQGAVYPLLTPDNGHLSHYFQQGYLFTRRRLQALVDDKFAVSYDFCGVLQTGFDDRSSARLDKIINGQSWNEKMAYPIDAASATQIAGIDIDKAGIYYPLGGWICPHEFTRAAFDKAARLSDVSVEFNADITRIEQREGLWYLYKSVNVQHSCTDSHTPDDSEELEIGPFANLVLANGQGLTQFKQSEKLPATGFRGQVSHIPSRNALTKLSTVLCSHGYLTPGNNNFHCTGASYVKNPTNLDYCATEQVENLHKIRHSYVDKPWTEDVDITGHSARVGVRMVTRDHAPMMGCAPDTDSMLAQYEQHQHTKESIKFWKETPAPTHKGLFILGGLGSRGLTSGPLAAEALAAQLCGEVIPLSMPMLEMLNPNRFWMRKLIKGKAL.

The interval 1–268 is tRNA (mnm(5)s(2)U34)-methyltransferase; it reads MPNMRHRVNS…RRALRHAQSD (268 aa). The FAD-dependent cmnm(5)s(2)U34 oxidoreductase stretch occupies residues 292–712; sequence IGGGVASTHL…MRKLIKGKAL (421 aa).

It in the N-terminal section; belongs to the methyltransferase superfamily. tRNA (mnm(5)s(2)U34)-methyltransferase family. In the C-terminal section; belongs to the DAO family. FAD is required as a cofactor.

Its subcellular location is the cytoplasm. The enzyme catalyses 5-aminomethyl-2-thiouridine(34) in tRNA + S-adenosyl-L-methionine = 5-methylaminomethyl-2-thiouridine(34) in tRNA + S-adenosyl-L-homocysteine + H(+). Catalyzes the last two steps in the biosynthesis of 5-methylaminomethyl-2-thiouridine (mnm(5)s(2)U) at the wobble position (U34) in tRNA. Catalyzes the FAD-dependent demodification of cmnm(5)s(2)U34 to nm(5)s(2)U34, followed by the transfer of a methyl group from S-adenosyl-L-methionine to nm(5)s(2)U34, to form mnm(5)s(2)U34. The chain is tRNA 5-methylaminomethyl-2-thiouridine biosynthesis bifunctional protein MnmC from Shewanella sediminis (strain HAW-EB3).